The chain runs to 379 residues: Glutamate 5-kinase (379 aa).

Lysine 15 contributes to the ATP binding site. Substrate contacts are provided by serine 56, aspartate 143, and asparagine 155. 175–176 (SD) is a binding site for ATP. The PUA domain occupies 281 to 358 (RGTLAIDAGA…SDAAQLLGVR (78 aa)).

This sequence belongs to the glutamate 5-kinase family.

It is found in the cytoplasm. It catalyses the reaction L-glutamate + ATP = L-glutamyl 5-phosphate + ADP. It participates in amino-acid biosynthesis; L-proline biosynthesis; L-glutamate 5-semialdehyde from L-glutamate: step 1/2. Catalyzes the transfer of a phosphate group to glutamate to form L-glutamate 5-phosphate. This chain is Glutamate 5-kinase, found in Nitrobacter winogradskyi (strain ATCC 25391 / DSM 10237 / CIP 104748 / NCIMB 11846 / Nb-255).